The primary structure comprises 307 residues: Methionyl-tRNA formyltransferase (307 aa).

Residue 108-111 (SLLP) participates in (6S)-5,6,7,8-tetrahydrofolate binding.

It belongs to the Fmt family.

The enzyme catalyses L-methionyl-tRNA(fMet) + (6R)-10-formyltetrahydrofolate = N-formyl-L-methionyl-tRNA(fMet) + (6S)-5,6,7,8-tetrahydrofolate + H(+). In terms of biological role, attaches a formyl group to the free amino group of methionyl-tRNA(fMet). The formyl group appears to play a dual role in the initiator identity of N-formylmethionyl-tRNA by promoting its recognition by IF2 and preventing the misappropriation of this tRNA by the elongation apparatus. The sequence is that of Methionyl-tRNA formyltransferase from Stenotrophomonas maltophilia (strain R551-3).